The primary structure comprises 322 residues: Phospho-N-acetylmuramoyl-pentapeptide-transferase (322 aa).

10 helical membrane passes run 9-29 (IALVSSLVLTVIFLPVLINFM), 54-74 (TMGGTIFVIAAVISVIWVAAW), 82-102 (VWILVISLLGYGIIGFLDDGI), 122-142 (IIIAVVIVLIASSDHFQFGLY), 145-165 (FAGVVHSIALFTIFIIFWLVG), 176-196 (LDGLATGLSIVAYGTYAYIAF), 200-220 (NFAVLAFCMSVIGGLIAFFIF), 227-247 (IFMGDAGSLALGGGLATVSIM), 255-275 (LLIGIVFVCETASVILQVISF), and 302-322 (VDIVFWLVGLICSILYLAIWG).

It belongs to the glycosyltransferase 4 family. MraY subfamily. Requires Mg(2+) as cofactor.

The protein localises to the cell membrane. It catalyses the reaction UDP-N-acetyl-alpha-D-muramoyl-L-alanyl-gamma-D-glutamyl-L-lysyl-D-alanyl-D-alanine + di-trans,octa-cis-undecaprenyl phosphate = Mur2Ac(oyl-L-Ala-gamma-D-Glu-L-Lys-D-Ala-D-Ala)-di-trans,octa-cis-undecaprenyl diphosphate + UMP. It participates in cell wall biogenesis; peptidoglycan biosynthesis. Catalyzes the initial step of the lipid cycle reactions in the biosynthesis of the cell wall peptidoglycan: transfers peptidoglycan precursor phospho-MurNAc-pentapeptide from UDP-MurNAc-pentapeptide onto the lipid carrier undecaprenyl phosphate, yielding undecaprenyl-pyrophosphoryl-MurNAc-pentapeptide, known as lipid I. The chain is Phospho-N-acetylmuramoyl-pentapeptide-transferase from Lactobacillus acidophilus (strain ATCC 700396 / NCK56 / N2 / NCFM).